The chain runs to 534 residues: High-affinity nicotinic acid transporter (534 aa).

At 1 to 130 (MSNKFTMESP…DIHLVGTQYN (130 aa)) the chain is on the extracellular side. A disordered region spans residues 21 to 56 (SPTNDGSEEKPTEVTFQEDEGHDASLHNRSHDKKSE). At Ser27 the chain carries Phosphoserine. A helical transmembrane segment spans residues 131–151 (TCVTVFFATYVLFDPIGTNLL). A topological domain (cytoplasmic) is located at residue Lys152. A helical membrane pass occupies residues 153–173 (IMGPPLMMSICLTCFGAISLG). At 174–187 (TAWVKNYAQLIVVR) the chain is on the extracellular side. The helical transmembrane segment at 188-208 (LLLGAFEGMIYPAINMYLSVC) threads the bilayer. Over 209–217 (YRREQYALR) the chain is Cytoplasmic. A helical transmembrane segment spans residues 218-238 (FAFVFSAACLSSSFGGLIAYG). Topologically, residues 239-250 (CSKISGSLKDWQ) are extracellular. The chain crosses the membrane as a helical span at residues 251-271 (YIYIVEGCISLGFVPFYAFGL). The Cytoplasmic segment spans residues 272-323 (SKNLEDSWFFNKEEKEYISERYKTMNTFDPDEKFEWFQVWQAVKDVKTWASA). A Glycyl lysine isopeptide (Lys-Gly) (interchain with G-Cter in ubiquitin) cross-link involves residue Lys283. Residues 324–344 (VALFGIDLTTFGLTVFLPIII) form a helical membrane-spanning segment. Topologically, residues 345 to 355 (TSMGFTNVRAQ) are extracellular. A helical transmembrane segment spans residues 356–376 (LMTVPIYFLTAIVFFICAVWS). Over 377 to 384 (DRIKLRSP) the chain is Cytoplasmic. Residues 385-405 (FILGACLTTSIGIAIVLGSQV) form a helical membrane-spanning segment. At 406 to 410 (HGVRY) the chain is on the extracellular side. The helical transmembrane segment at 411–431 (FGVYILCMGIYVNAACNCLWL) threads the bilayer. Over 432–444 (SGNTGNYFKRATA) the chain is Cytoplasmic. A helical membrane pass occupies residues 445 to 465 (LGINLFFGSGSGLVSGQIFVA). Over 466–474 (KDKPRYIKG) the chain is Extracellular. The chain crosses the membrane as a helical span at residues 475 to 495 (LSISLAFQVFSIFMTVVQIFL). Residues 496–534 (YKRENDKKKAIIDRCNELGEPIPYDERLSDKNPEFKYMY) lie on the Cytoplasmic side of the membrane.

The protein belongs to the major facilitator superfamily. Allantoate permease family.

It is found in the membrane. In terms of biological role, involved in the uptake of nicotinic acid. This is High-affinity nicotinic acid transporter (TNA1) from Saccharomyces cerevisiae (strain ATCC 204508 / S288c) (Baker's yeast).